We begin with the raw amino-acid sequence, 252 residues long: Sulfate transporter CysZ (252 aa).

5 helical membrane passes run 29–49, 66–86, 141–160, 164–186, and 212–232; these read FVLLPLIANVLLVGGALFYIF, FLSWLSYILWPLLVLTVLATF, LVYILPKAIGLFLLLLIPAL, VAPFLWFIFTAWMLAIQYADYPF, and ALVSVFTTIPVLNLIVMPVAV.

This sequence belongs to the CysZ family.

The protein resides in the cell inner membrane. High affinity, high specificity proton-dependent sulfate transporter, which mediates sulfate uptake. Provides the sulfur source for the cysteine synthesis pathway. The protein is Sulfate transporter CysZ of Vibrio atlanticus (strain LGP32) (Vibrio splendidus (strain Mel32)).